The primary structure comprises 727 residues: Translation initiation factor IF-2, mitochondrial (727 aa).

A mitochondrion-targeting transit peptide spans 1–29 (MNQKLLKLENLLRFHTIYRQLHSLCQRRA). A tr-type G domain is found at 178–348 (PRSPVVTIMG…VALAEMLELK (171 aa)). Residues 187–194 (GHVDHGKT) form a G1 region. 187-194 (GHVDHGKT) contacts GTP. The interval 212-216 (GITQH) is G2. GTP is bound by residues 234–237 (DTPG) and 288–291 (NKCD). Residues 234–237 (DTPG) are G3. Residues 288-291 (NKCD) form a G4 region. A G5 region spans residues 324–326 (SAL). Threonine 688 carries the phosphothreonine modification.

This sequence belongs to the TRAFAC class translation factor GTPase superfamily. Classic translation factor GTPase family. IF-2 subfamily. As to quaternary structure, monomer. Expressed in all tissues examined. Highest level in skeletal muscle.

It is found in the mitochondrion. In terms of biological role, one of the essential components for the initiation of protein synthesis. Protects formylmethionyl-tRNA from spontaneous hydrolysis and promotes its binding to the 30S ribosomal subunits. Also involved in the hydrolysis of GTP during the formation of the 70S ribosomal complex. The sequence is that of Translation initiation factor IF-2, mitochondrial (MTIF2) from Homo sapiens (Human).